A 222-amino-acid chain; its full sequence is Protein MKS1 (222 aa).

The disordered stretch occupies residues 1 to 61 (MDPSEYFAGG…PNRDQPPPYI (61 aa)). Residues 12-21 (PSDQQNQKRQ) are compositionally biased toward polar residues. S30 carries the post-translational modification Phosphoserine. Over residues 37–46 (DSHKIKKPPK) the composition is skewed to basic residues. Residues 47–61 (HPAPPPNRDQPPPYI) are compositionally biased toward pro residues. Position 72 is a phosphoserine (S72). The VQ motif lies at 83–92 (FMNVVQRLTG). Residues 105–130 (GDVSPAARLASTENASPRGGKEPAAR) form a disordered region. Residues S108 and S120 each carry the phosphoserine modification.

Interacts with MPK4, WRKY25 and WRKY33. Phosphorylated on serine residue by MPK4.

It localises to the nucleus. Functionally, regulator of plant defense response. May contribute to MPK4-regulated defense activation by coupling the kinase to specific WRKY transcription factors. This Arabidopsis thaliana (Mouse-ear cress) protein is Protein MKS1 (MKS1).